The sequence spans 107 residues: uncharacterized protein (107 aa).

Positions 23 to 64 (SASSSSSTRIPSGFASATSSKSNSSTKSSPSPINSFNNKTNN) are disordered. Residues 37–57 (ASATSSKSNSSTKSSPSPINS) are compositionally biased toward low complexity. A helical transmembrane segment spans residues 76-98 (LAFGIVEFMVFNGMISTITTTTF).

It localises to the membrane. This is an uncharacterized protein from Dictyostelium discoideum (Social amoeba).